Reading from the N-terminus, the 600-residue chain is Methionine--tRNA ligase (600 aa).

Positions 11–21 (PYANGPRHIGH) match the 'HIGH' region motif. Positions 143, 146, 156, and 159 each coordinate Zn(2+). A 'KMSKS' region motif is present at residues 350–354 (QFSSS). Position 353 (Ser-353) interacts with ATP.

Belongs to the class-I aminoacyl-tRNA synthetase family. MetG type 1 subfamily. In terms of assembly, monomer. It depends on Zn(2+) as a cofactor.

The protein resides in the cytoplasm. The catalysed reaction is tRNA(Met) + L-methionine + ATP = L-methionyl-tRNA(Met) + AMP + diphosphate. Functionally, is required not only for elongation of protein synthesis but also for the initiation of all mRNA translation through initiator tRNA(fMet) aminoacylation. The polypeptide is Methionine--tRNA ligase (Kineococcus radiotolerans (strain ATCC BAA-149 / DSM 14245 / SRS30216)).